A 388-amino-acid chain; its full sequence is Alpha-2B adrenergic receptor (388 aa).

A helical membrane pass occupies residues Ala1–Leu25. Over Thr26 to Leu36 the chain is Cytoplasmic. A helical membrane pass occupies residues Phe37–Leu62. Topologically, residues Gly63–Cys72 are extracellular. Cys72 and Cys151 form a disulfide bridge. Residues Glu73–Leu95 form a helical membrane-spanning segment. Over Asp96–Lys117 the chain is Cytoplasmic. Residues Cys118 to Asp140 traverse the membrane as a helical segment. Over Gln141 to Glu156 the chain is Extracellular. The helical transmembrane segment at Ala157–Leu180 threads the bilayer. Over Arg181–Val352 the chain is Cytoplasmic. The interval Gly193–Gln309 is disordered. The segment covering Pro239 to Glu249 has biased composition (basic and acidic residues). Positions Pro279 to Glu291 are enriched in acidic residues. The span at Pro292–Ala302 shows a compositional bias: low complexity. Residues Leu353–Ile376 traverse the membrane as a helical segment. Residues Cys377 to His385 are Extracellular-facing. Residues Gly386–Phe388 form a helical membrane-spanning segment.

Belongs to the G-protein coupled receptor 1 family. Adrenergic receptor subfamily. ADRA2B sub-subfamily. As to quaternary structure, interacts with RAB26. Interacts with PPP1R9B.

It is found in the cell membrane. In terms of biological role, alpha-2 adrenergic receptors mediate the catecholamine-induced inhibition of adenylate cyclase through the action of G proteins. In Orycteropus afer (Aardvark), this protein is Alpha-2B adrenergic receptor (ADRA2B).